Consider the following 278-residue polypeptide: Protein FixR (278 aa).

Leu40–Ile64 provides a ligand contact to NAD(+). Ser175 is a substrate binding site. Residue Tyr189 is the Proton acceptor of the active site.

Belongs to the short-chain dehydrogenases/reductases (SDR) family.

The chain is Protein FixR (fixR) from Bradyrhizobium diazoefficiens (strain JCM 10833 / BCRC 13528 / IAM 13628 / NBRC 14792 / USDA 110).